We begin with the raw amino-acid sequence, 447 residues long: GTPase Der (447 aa).

EngA-type G domains are found at residues 4-165 (KIIA…PEEE) and 180-357 (LQIV…KIWN). Residues 10–17 (GRPNVGKS), 57–61 (DTPGL), 119–122 (NKCE), 186–193 (GRPNAGKS), 233–237 (DTAGL), and 298–301 (NKWD) each bind GTP. Residues 358–443 (KKIATSKLNE…PIRFTYVKTK (86 aa)) form the KH-like domain.

The protein belongs to the TRAFAC class TrmE-Era-EngA-EngB-Septin-like GTPase superfamily. EngA (Der) GTPase family. Associates with the 50S ribosomal subunit.

GTPase that plays an essential role in the late steps of ribosome biogenesis. This is GTPase Der from Rickettsia akari (strain Hartford).